Here is a 1556-residue protein sequence, read N- to C-terminus: Bromodomain adjacent to zinc finger domain protein 1A (1556 aa).

A required for interaction with the CHRAC1-POLE3 heterodimer. Required for interaction with the CHRAC1-POLE3 heterodimer region spans residues 1–128 (MPLLHRKPFV…EETVEVIRNN (128 aa)). A required for interaction with NCOR1 region spans residues 1 to 133 (MPLLHRKPFV…VIRNNGARLQ (133 aa)). In terms of domain architecture, WAC spans 22–128 (EEVFYCKVTN…EETVEVIRNN (107 aa)). At serine 270 the chain carries Phosphoserine. Residues 306–397 (KERDKLLKQE…YVEYLKQWSK (92 aa)) are a coiled coil. Residues 422 to 487 (PEIFGDALMV…LTAIFQAIAE (66 aa)) form the DDT domain. The stretch at 634 to 709 (IEDYVDILRQ…DISIGEEERE (76 aa)) forms a coiled coil. Positions 662–695 (EAAARIRKRKEEKLKEQEQKMKEKQEKLKEDEQR) are enriched in basic and acidic residues. 3 disordered regions span residues 662–754 (EAAA…NGFK), 841–877 (PSSFQNNVQSQDPQVSTKTGEPLMSESTSNIDQGPRD), and 941–966 (FHFSDKPQPDSKPTYSRGRSSNAYDP). The required for interaction with SMARCA5 and formation of the CHRAC ISWI chromatin remodeling complex stretch occupies residues 667 to 933 (IRKRKEEKLK…QEKSRICAQL (267 aa)). The residue at position 702 (serine 702) is a Phosphoserine. Over residues 703-713 (IGEEEREDFDT) the composition is skewed to acidic residues. The span at 715 to 726 (IESKDTEQKELD) shows a compositional bias: basic and acidic residues. Residues 727 to 736 (QDMVTEDEDD) are compositionally biased toward acidic residues. At threonine 731 the chain carries Phosphothreonine. 2 stretches are compositionally biased toward polar residues: residues 842-872 (SSFQNNVQSQDPQVSTKTGEPLMSESTSNID) and 951-965 (SKPTYSRGRSSNAYD). A Glycyl lysine isopeptide (Lys-Gly) (interchain with G-Cter in SUMO2) cross-link involves residue lysine 952. Phosphoserine is present on residues serine 960 and serine 961. The PHD-type zinc-finger motif lies at 1148–1198 (NARCKICRKKGDAENMVLCDGCDRGHHTYCVRPKLKTVPEGDWFCPECRPK). 2 disordered regions span residues 1202–1376 (RRLS…NFPN) and 1399–1431 (LQESESKRRCRKRQSPEPSPVTLGRRSSGRQGG). Positions 1213–1258 (ESDEDVEDSMGGEDDEVDGDEEEGQSEEEEYEVEQDEDDSQEEEEV) are enriched in acidic residues. Basic residues predominate over residues 1262-1276 (KRGRPQVRLPVKTRG). The span at 1277-1312 (KLSSSFSSRGQQQEPGRYPSRSQQSTPKTTVSSKTG) shows a compositional bias: polar residues. Serine 1281, serine 1320, serine 1339, serine 1353, serine 1363, serine 1371, serine 1402, serine 1413, and serine 1417 each carry phosphoserine. The span at 1363–1374 (SANNTPENSPNF) shows a compositional bias: polar residues. One can recognise a Bromo domain in the interval 1430–1533 (GGVHELSAFE…AFFHIQAQKL (104 aa)). Phosphothreonine is present on threonine 1547.

The protein belongs to the WAL family. Component of the ACF-1 ISWI chromatin remodeling complex at least composed of SMARCA1 and BAZ1A, which regulates the spacing of histone octamers on the DNA template to facilitate access to DNA. Within the ACF-1 ISWI chromatin remodeling complex interacts with SMARCA1; the interaction is direct. Component of the ACF-5 ISWI chromatin remodeling complex (also called the ACF complex) at least composed of BAZ1A and SMARCA5/SNF2H, which regulates the spacing of histone octamers on the DNA template to facilitate access to DNA. Within the ACF-5 ISWI chromatin remodeling complex interacts with SMARCA5/SNF2H; the interaction is direct. Component of the CHRAC ISWI chromatin remodeling complex at least composed of SMARCA5/SNF2H, BAZ1A/ACF1, CHRAC1 and POLE3; the complex preferentially binds DNA through the CHRAC1-POLE3 heterodimer and possesses ATP-dependent nucleosome-remodeling activity. Within the complex interacts (via N-terminus) with POLE3-CHRAC1 heterodimer; the interaction is direct and is required for the complex to preferentially bind to DNA. Within the complex interacts with SMARCA5/SNF2H; the interaction is direct and promotes the interaction with the POLE3-CHRAC1 heterodimer. Interacts with NCOR1 (via its RD1 domain); the interaction corepresses a number of NCOR1-regulated genes. As to expression, highly expressed in testis and at low or undetectable levels in other tissues analyzed.

The protein resides in the nucleus. Functionally, regulatory subunit of the ATP-dependent ACF-1 and ACF-5 ISWI chromatin remodeling complexes, which form ordered nucleosome arrays on chromatin and slide edge- and center-positioned histone octamers away from their original location on the DNA template to facilitate access to DNA during DNA-templated processes such as DNA replication, transcription, and repair. Both complexes regulate the spacing of nucleosomes along the chromatin and have the ability to slide mononucleosomes to the center of a DNA template in an ATP-dependent manner. The ACF-1 ISWI chromatin remodeling complex has a lower ATP hydrolysis rate than the ACF-5 ISWI chromatin remodeling complex. Has a role in sensing the length of DNA which flank nucleosomes, which modulates the nucleosome spacing activity of the ACF-5 ISWI chromatin remodeling complex. Involved in DNA replication and together with SMARCA5/SNF2H is required for replication of pericentric heterochromatin in S-phase. May have a role in nuclear receptor-mediated transcription repression. The protein is Bromodomain adjacent to zinc finger domain protein 1A (BAZ1A) of Homo sapiens (Human).